Here is a 194-residue protein sequence, read N- to C-terminus: Protein LKAAEAR1 (194 aa).

A disordered region spans residues 1 to 45 (MPPPAKEGGRKGPRERSGKSAPGTAQGEERAKGAPATEPPKPGWA). The segment covering 7–18 (EGGRKGPRERSG) has biased composition (basic and acidic residues).

This Homo sapiens (Human) protein is Protein LKAAEAR1 (LKAAEAR1).